The chain runs to 218 residues: Phosphatidylserine decarboxylase proenzyme (218 aa).

The Schiff-base intermediate with substrate; via pyruvic acid role is filled by S187. Position 187 is a pyruvic acid (Ser); by autocatalysis (S187).

Belongs to the phosphatidylserine decarboxylase family. PSD-A subfamily. As to quaternary structure, heterodimer of a large membrane-associated beta subunit and a small pyruvoyl-containing alpha subunit. The cofactor is pyruvate. Is synthesized initially as an inactive proenzyme. Formation of the active enzyme involves a self-maturation process in which the active site pyruvoyl group is generated from an internal serine residue via an autocatalytic post-translational modification. Two non-identical subunits are generated from the proenzyme in this reaction, and the pyruvate is formed at the N-terminus of the alpha chain, which is derived from the carboxyl end of the proenzyme. The post-translation cleavage follows an unusual pathway, termed non-hydrolytic serinolysis, in which the side chain hydroxyl group of the serine supplies its oxygen atom to form the C-terminus of the beta chain, while the remainder of the serine residue undergoes an oxidative deamination to produce ammonia and the pyruvoyl prosthetic group on the alpha chain.

The protein resides in the cell membrane. It carries out the reaction a 1,2-diacyl-sn-glycero-3-phospho-L-serine + H(+) = a 1,2-diacyl-sn-glycero-3-phosphoethanolamine + CO2. Its pathway is phospholipid metabolism; phosphatidylethanolamine biosynthesis; phosphatidylethanolamine from CDP-diacylglycerol: step 2/2. In terms of biological role, catalyzes the formation of phosphatidylethanolamine (PtdEtn) from phosphatidylserine (PtdSer). This chain is Phosphatidylserine decarboxylase proenzyme, found in Geobacter sulfurreducens (strain ATCC 51573 / DSM 12127 / PCA).